Consider the following 91-residue polypeptide: Small ribosomal subunit protein bS18 (91 aa).

This sequence belongs to the bacterial ribosomal protein bS18 family. In terms of assembly, part of the 30S ribosomal subunit. Forms a tight heterodimer with protein bS6.

In terms of biological role, binds as a heterodimer with protein bS6 to the central domain of the 16S rRNA, where it helps stabilize the platform of the 30S subunit. The protein is Small ribosomal subunit protein bS18 of Burkholderia vietnamiensis (strain G4 / LMG 22486) (Burkholderia cepacia (strain R1808)).